A 102-amino-acid polypeptide reads, in one-letter code: Small ribosomal subunit protein uS10 (102 aa).

The protein belongs to the universal ribosomal protein uS10 family. Part of the 30S ribosomal subunit.

Involved in the binding of tRNA to the ribosomes. This Paramagnetospirillum magneticum (strain ATCC 700264 / AMB-1) (Magnetospirillum magneticum) protein is Small ribosomal subunit protein uS10.